A 578-amino-acid polypeptide reads, in one-letter code: MAETSKQVNGDDAQDLHSLLSSPARDFLVRNDGEQVKVDSLLGKKIGLYFSAAWCGPCQRFTPQLVEVYNELSSKVGFEIVFVSGDEDEESFGDYFRKMPWLAVPFTDSETRDRLDELFKVRGIPNLVMVDDHGKLVNENGVGVIRSYGADAYPFTPEKMKEIKEDEDRARRGQTLRSVLVTPSRDFVISPDGNKVPVSELEGKTIGLLFSVASYRKCTELTPKLVEFYTKLKENKEDFEIVLISLEDDEESFNQDFKTKPWLALPFNDKSGSKLARHFMLSTLPTLVILGPDGKTRHSNVAEAIDDYGVLAYPFTPEKFQELKELEKAKVEAQTLESLLVSGDLNYVLGKDGAKVLVSDLVGKTILMYFSAHWCPPCRAFTPKLVEVYKQIKERNEAFELIFISSDRDQESFDEYYSQMPWLALPFGDPRKASLAKTFKVGGIPMLAALGPTGQTVTKEARDLVVAHGADAYPFTEERLKEIEAKYDEIAKDWPKKVKHVLHEEHELELTRVQVYTCDKCEEEGTIWSYHCDECDFDLHAKCALNEDTKENGDEAVKVGGDESKDGWVCEGNVCTKA.

Thioredoxin domains follow at residues 18–172 (SLLS…RARR), 178–321 (SVLV…EKFQ), and 325–485 (ELEK…EIEA).

It belongs to the nucleoredoxin family.

The catalysed reaction is [protein]-dithiol + NAD(+) = [protein]-disulfide + NADH + H(+). The enzyme catalyses [protein]-dithiol + NADP(+) = [protein]-disulfide + NADPH + H(+). Its function is as follows. Probable thiol-disulfide oxidoreductase required for pollen tube growth and pollen function in the pistil. Seems not to be required for in vitro pollen tube growth. May be involved in the generation of lipid signaling molecules in pistil. The polypeptide is Probable nucleoredoxin 1 (Arabidopsis thaliana (Mouse-ear cress)).